The primary structure comprises 202 residues: Na(+)-translocating NADH-quinone reductase subunit E (202 aa).

The next 6 helical transmembrane spans lie at 11–31 (SVFVKNMALAYFLGMCTFLAI), 35–55 (IDAAIGLGIAVVVVLTITVPV), 81–101 (FLGLICYIGVIAAIVQIMEMV), 114–134 (GVFLPLITVNCAILGAALLMV), 144–164 (VVFGVGSGVGWAFAIVALAGI), and 182–202 (ITFITVGLMSLGFMSFGGIAL).

It belongs to the NqrDE/RnfAE family. As to quaternary structure, composed of six subunits; NqrA, NqrB, NqrC, NqrD, NqrE and NqrF.

The protein resides in the cell inner membrane. The enzyme catalyses a ubiquinone + n Na(+)(in) + NADH + H(+) = a ubiquinol + n Na(+)(out) + NAD(+). In terms of biological role, NQR complex catalyzes the reduction of ubiquinone-1 to ubiquinol by two successive reactions, coupled with the transport of Na(+) ions from the cytoplasm to the periplasm. NqrA to NqrE are probably involved in the second step, the conversion of ubisemiquinone to ubiquinol. The protein is Na(+)-translocating NADH-quinone reductase subunit E of Saccharophagus degradans (strain 2-40 / ATCC 43961 / DSM 17024).